We begin with the raw amino-acid sequence, 451 residues long: uncharacterized protein (451 aa).

The disordered stretch occupies residues 415 to 435; sequence AHGDTEWLPPPHLDHGQPRVN.

Belongs to the Rv1128c/1148c/1588c/1702c/1945/3466 family.

This is an uncharacterized protein from Mycobacterium tuberculosis (strain ATCC 25618 / H37Rv).